The sequence spans 267 residues: tRNA pseudouridine synthase A (267 aa).

Catalysis depends on aspartate 51, which acts as the Nucleophile. Tyrosine 109 contacts substrate.

It belongs to the tRNA pseudouridine synthase TruA family. In terms of assembly, homodimer.

It carries out the reaction uridine(38/39/40) in tRNA = pseudouridine(38/39/40) in tRNA. Formation of pseudouridine at positions 38, 39 and 40 in the anticodon stem and loop of transfer RNAs. The chain is tRNA pseudouridine synthase A from Staphylococcus carnosus (strain TM300).